A 33-amino-acid polypeptide reads, in one-letter code: Cytochrome b6-f complex subunit 8 (33 aa).

The helical transmembrane segment at 2–22 (IFQIGWAALAAIFTFSIAMVV) threads the bilayer.

Belongs to the PetN family. As to quaternary structure, the 4 large subunits of the cytochrome b6-f complex are cytochrome b6, subunit IV (17 kDa polypeptide, PetD), cytochrome f and the Rieske protein, while the 4 small subunits are PetG, PetL, PetM and PetN. The complex functions as a dimer.

The protein localises to the cellular thylakoid membrane. Functionally, component of the cytochrome b6-f complex, which mediates electron transfer between photosystem II (PSII) and photosystem I (PSI), cyclic electron flow around PSI, and state transitions. In Prochlorococcus marinus (strain MIT 9301), this protein is Cytochrome b6-f complex subunit 8.